The primary structure comprises 108 residues: Trp operon repressor homolog (108 aa).

The DNA-binding element occupies Q59–S82.

This sequence belongs to the TrpR family. Homodimer.

It localises to the cytoplasm. This protein is an aporepressor. When complexed with L-tryptophan it binds the operator region of the trp operon and prevents the initiation of transcription. The chain is Trp operon repressor homolog from Aliivibrio fischeri (strain MJ11) (Vibrio fischeri).